We begin with the raw amino-acid sequence, 338 residues long: dTDP-glucose 4,6-dehydratase (338 aa).

Residues 12-13 (FI), 33-36 (DKLT), 59-60 (DI), 81-85 (LAAES), and T100 contribute to the NAD(+) site. S85 is a substrate binding site. T134 contributes to the substrate binding site. Catalysis depends on D135, which acts as the Proton donor. Residues E136 and Y160 each act as proton acceptor in the active site. 160-164 (YSASK) serves as a coordination point for NAD(+). Position 189 (N189) interacts with substrate. NAD(+) is bound at residue N190. Substrate-binding positions include 199–200 (KL), 215–217 (PIY), R224, N259, and 293–297 (DRPGH).

This sequence belongs to the NAD(P)-dependent epimerase/dehydratase family. dTDP-glucose dehydratase subfamily. As to quaternary structure, homodimer. It depends on NAD(+) as a cofactor.

The catalysed reaction is dTDP-alpha-D-glucose = dTDP-4-dehydro-6-deoxy-alpha-D-glucose + H2O. Its pathway is carbohydrate biosynthesis; dTDP-L-rhamnose biosynthesis. It participates in bacterial outer membrane biogenesis; LPS O-antigen biosynthesis. Catalyzes the dehydration of dTDP-D-glucose to form dTDP-6-deoxy-D-xylo-4-hexulose via a three-step process involving oxidation, dehydration and reduction. This chain is dTDP-glucose 4,6-dehydratase (rffG), found in Haemophilus influenzae (strain ATCC 51907 / DSM 11121 / KW20 / Rd).